A 256-amino-acid chain; its full sequence is Thiazole synthase (256 aa).

Residue Lys-95 is the Schiff-base intermediate with DXP of the active site. 1-deoxy-D-xylulose 5-phosphate is bound by residues Gly-156, 182–183, and 204–205; these read AG and NT.

Belongs to the ThiG family. Homotetramer. Forms heterodimers with either ThiH or ThiS.

It is found in the cytoplasm. It catalyses the reaction [ThiS sulfur-carrier protein]-C-terminal-Gly-aminoethanethioate + 2-iminoacetate + 1-deoxy-D-xylulose 5-phosphate = [ThiS sulfur-carrier protein]-C-terminal Gly-Gly + 2-[(2R,5Z)-2-carboxy-4-methylthiazol-5(2H)-ylidene]ethyl phosphate + 2 H2O + H(+). It functions in the pathway cofactor biosynthesis; thiamine diphosphate biosynthesis. Catalyzes the rearrangement of 1-deoxy-D-xylulose 5-phosphate (DXP) to produce the thiazole phosphate moiety of thiamine. Sulfur is provided by the thiocarboxylate moiety of the carrier protein ThiS. In vitro, sulfur can be provided by H(2)S. This is Thiazole synthase from Shigella boydii serotype 18 (strain CDC 3083-94 / BS512).